Consider the following 514-residue polypeptide: Cobyric acid synthase (514 aa).

Residues alanine 263–leucine 457 form the GATase cobBQ-type domain. The active-site Nucleophile is cysteine 344. Histidine 449 is an active-site residue.

The protein belongs to the CobB/CobQ family. CobQ subfamily.

Its pathway is cofactor biosynthesis; adenosylcobalamin biosynthesis. Its function is as follows. Catalyzes amidations at positions B, D, E, and G on adenosylcobyrinic A,C-diamide. NH(2) groups are provided by glutamine, and one molecule of ATP is hydrogenolyzed for each amidation. This chain is Cobyric acid synthase, found in Desulfitobacterium hafniense (strain DSM 10664 / DCB-2).